The chain runs to 1960 residues: Exophilin-5 (1960 aa).

The RabBD domain maps to 7–63 (GFDFSFLNEEEARKILQVLERNEELRRAEKDRISKLQKTKRDIRWLQGATGEWFEEI). 3 stretches are compositionally biased toward polar residues: residues 325–334 (ASPATGSFTA), 342–366 (DTQN…LSSI), and 635–645 (SQSSSFPDSTA). Disordered stretches follow at residues 325 to 366 (ASPA…LSSI), 616 to 645 (TPAS…DSTA), 672 to 720 (HSTD…TGLP), 734 to 835 (DFQN…SSNT), and 910 to 976 (FSRS…KGRV). Low complexity predominate over residues 673–682 (STDSLSLTDT). The span at 692–707 (NSEKDMDVSVSKDEQL) shows a compositional bias: basic and acidic residues. 2 positions are modified to phosphoserine: Ser-799 and Ser-802. Polar residues-rich tracts occupy residues 808–835 (ESGT…SSNT) and 910–920 (FSRSLSDQDPG). A compositionally biased stretch (basic and acidic residues) spans 921-932 (QEQREEKDKATK). Residues 933 to 945 (SQDNQLAVNSTDN) are compositionally biased toward polar residues. Ser-1027 is modified (phosphoserine). The segment at 1035–1095 (QESKGTVASV…PKATKKMTDM (61 aa)) is disordered. The span at 1062 to 1074 (GKSTSDKPSSPES) shows a compositional bias: polar residues. Residues Ser-1083 and Ser-1117 each carry the phosphoserine modification. Disordered regions lie at residues 1291–1375 (AQVQ…LSRE), 1389–1493 (PLLH…DSES), and 1510–1759 (EAQP…EPHL). Over residues 1318 to 1336 (PESKDVSQLPDRETSKSTL) the composition is skewed to basic and acidic residues. A compositionally biased stretch (polar residues) spans 1356–1365 (KEISPSNVSK). Positions 1392 to 1403 (HQEKGAGKEHTK) are enriched in basic and acidic residues. Composition is skewed to polar residues over residues 1470 to 1493 (RETS…DSES) and 1520 to 1533 (SEAS…TNTA). Ser-1493 carries the phosphoserine modification. Basic and acidic residues-rich tracts occupy residues 1534 to 1546 (EMRK…HMLT) and 1561 to 1571 (TNTDETKDRYS). Over residues 1572–1586 (GKHRLAAISKASKRI) the composition is skewed to basic residues. The span at 1637-1657 (ESSQMNVDKSETLLQETTVSS) shows a compositional bias: polar residues. 4 positions are modified to phosphoserine: Ser-1724, Ser-1739, Ser-1789, and Ser-1819. Polar residues predominate over residues 1732 to 1741 (TQKSTINSHC). Disordered stretches follow at residues 1828–1847 (ESES…STSS) and 1906–1960 (VNSP…ESEL). A compositionally biased stretch (acidic residues) spans 1939 to 1950 (WDTDTTTDDEYY). Residues 1951-1960 (LDEKDKESEL) show a composition bias toward basic and acidic residues.

Interacts with RAB27A.

Functionally, may act as Rab effector protein and play a role in vesicle trafficking. The sequence is that of Exophilin-5 from Mus musculus (Mouse).